We begin with the raw amino-acid sequence, 310 residues long: Protein-L-isoaspartate O-methyltransferase (310 aa).

Disordered regions lie at residues 1 to 42 and 64 to 90; these read MSGE…AADK and SAAA…APSV. Over residues 14–32 the composition is skewed to basic and acidic residues; it reads EDLKRAPRKSEGRAGERHA. Residues 64–81 are compositionally biased toward low complexity; sequence SAAAKPATAPKPTALKPA. Ser-157 is an active-site residue.

The protein belongs to the methyltransferase superfamily. L-isoaspartyl/D-aspartyl protein methyltransferase family.

The protein localises to the cytoplasm. The catalysed reaction is [protein]-L-isoaspartate + S-adenosyl-L-methionine = [protein]-L-isoaspartate alpha-methyl ester + S-adenosyl-L-homocysteine. Functionally, catalyzes the methyl esterification of L-isoaspartyl residues in peptides and proteins that result from spontaneous decomposition of normal L-aspartyl and L-asparaginyl residues. It plays a role in the repair and/or degradation of damaged proteins. This chain is Protein-L-isoaspartate O-methyltransferase, found in Burkholderia lata (strain ATCC 17760 / DSM 23089 / LMG 22485 / NCIMB 9086 / R18194 / 383).